Reading from the N-terminus, the 313-residue chain is tRNA-cytidine(32) 2-sulfurtransferase (313 aa).

The short motif at 47 to 52 is the PP-loop motif element; sequence SGGKDS. [4Fe-4S] cluster is bound by residues Cys122, Cys125, and Cys213.

This sequence belongs to the TtcA family. In terms of assembly, homodimer. The cofactor is Mg(2+). It depends on [4Fe-4S] cluster as a cofactor.

It is found in the cytoplasm. It carries out the reaction cytidine(32) in tRNA + S-sulfanyl-L-cysteinyl-[cysteine desulfurase] + AH2 + ATP = 2-thiocytidine(32) in tRNA + L-cysteinyl-[cysteine desulfurase] + A + AMP + diphosphate + H(+). Its pathway is tRNA modification. Functionally, catalyzes the ATP-dependent 2-thiolation of cytidine in position 32 of tRNA, to form 2-thiocytidine (s(2)C32). The sulfur atoms are provided by the cysteine/cysteine desulfurase (IscS) system. This is tRNA-cytidine(32) 2-sulfurtransferase from Yersinia enterocolitica serotype O:8 / biotype 1B (strain NCTC 13174 / 8081).